The following is a 116-amino-acid chain: Protein Rev (116 aa).

Phosphoserine; by host CK2 is present on residues Ser-5 and Ser-8. Residues 18–26 form a homomultimerization region; the sequence is LIKFLYQSN. The segment at 23–49 is disordered; it reads YQSNPPPNPEGTRQARRNRRRRWRERQ. The Nuclear localization signal and RNA-binding (RRE) motif lies at 34–50; it reads TRQARRNRRRRWRERQR. Residues 36-47 show a composition bias toward basic residues; the sequence is QARRNRRRRWRE. The Nuclear export signal and binding to XPO1 signature appears at 73–84; that stretch reads LQLPPLERLTLD. Ser-92 and Ser-99 each carry phosphoserine; by host.

This sequence belongs to the HIV-1 REV protein family. In terms of assembly, homomultimer; when bound to the RRE. Multimeric assembly is essential for activity and may involve XPO1. Binds to human KPNB1, XPO1, TNPO1, RANBP5 and IPO7. Interacts with the viral Integrase. Interacts with human KHDRBS1. Interacts with human NAP1; this interaction decreases Rev multimerization and stimulates its activity. Interacts with human DEAD-box helicases DDX3 and DDX24; these interactions may serve for viral RNA export to the cytoplasm and packaging, respectively. Interacts with human PSIP1; this interaction may inhibit HIV-1 DNA integration by promoting dissociation of the Integrase-LEDGF/p75 complex. Asymmetrically arginine dimethylated at one site by host PRMT6. Methylation impairs the RNA-binding activity and export of viral RNA from the nucleus to the cytoplasm. Post-translationally, phosphorylated by protein kinase CK2. Presence of, and maybe binding to the N-terminus of the regulatory beta subunit of CK2 is necessary for CK2-mediated Rev's phosphorylation.

It is found in the host nucleus. It localises to the host nucleolus. The protein localises to the host cytoplasm. Its function is as follows. Escorts unspliced or incompletely spliced viral pre-mRNAs (late transcripts) out of the nucleus of infected cells. These pre-mRNAs carry a recognition sequence called Rev responsive element (RRE) located in the env gene, that is not present in fully spliced viral mRNAs (early transcripts). This function is essential since most viral proteins are translated from unspliced or partially spliced pre-mRNAs which cannot exit the nucleus by the pathway used by fully processed cellular mRNAs. Rev itself is translated from a fully spliced mRNA that readily exits the nucleus. Rev's nuclear localization signal (NLS) binds directly to KPNB1/Importin beta-1 without previous binding to KPNA1/Importin alpha-1. KPNB1 binds to the GDP bound form of RAN (Ran-GDP) and targets Rev to the nucleus. In the nucleus, the conversion from Ran-GDP to Ran-GTP dissociates Rev from KPNB1 and allows Rev's binding to the RRE in viral pre-mRNAs. Rev multimerization on the RRE via cooperative assembly exposes its nuclear export signal (NES) to the surface. Rev can then form a complex with XPO1/CRM1 and Ran-GTP, leading to nuclear export of the complex. Conversion from Ran-GTP to Ran-GDP mediates dissociation of the Rev/RRE/XPO1/RAN complex, so that Rev can return to the nucleus for a subsequent round of export. Beside KPNB1, also seems to interact with TNPO1/Transportin-1, RANBP5/IPO5 and IPO7/RANBP7 for nuclear import. The nucleoporin-like HRB/RIP is an essential cofactor that probably indirectly interacts with Rev to release HIV RNAs from the perinuclear region to the cytoplasm. The chain is Protein Rev from Human immunodeficiency virus type 1 group M subtype B (isolate HXB3) (HIV-1).